The chain runs to 117 residues: Large ribosomal subunit protein uL22 (117 aa).

The protein belongs to the universal ribosomal protein uL22 family. As to quaternary structure, part of the 50S ribosomal subunit.

This protein binds specifically to 23S rRNA; its binding is stimulated by other ribosomal proteins, e.g. L4, L17, and L20. It is important during the early stages of 50S assembly. It makes multiple contacts with different domains of the 23S rRNA in the assembled 50S subunit and ribosome. Functionally, the globular domain of the protein is located near the polypeptide exit tunnel on the outside of the subunit, while an extended beta-hairpin is found that lines the wall of the exit tunnel in the center of the 70S ribosome. The chain is Large ribosomal subunit protein uL22 from Latilactobacillus sakei subsp. sakei (strain 23K) (Lactobacillus sakei subsp. sakei).